The chain runs to 305 residues: Methionyl-tRNA formyltransferase (305 aa).

A (6S)-5,6,7,8-tetrahydrofolate-binding site is contributed by 108 to 111; sequence SLLP.

Belongs to the Fmt family.

The enzyme catalyses L-methionyl-tRNA(fMet) + (6R)-10-formyltetrahydrofolate = N-formyl-L-methionyl-tRNA(fMet) + (6S)-5,6,7,8-tetrahydrofolate + H(+). Attaches a formyl group to the free amino group of methionyl-tRNA(fMet). The formyl group appears to play a dual role in the initiator identity of N-formylmethionyl-tRNA by promoting its recognition by IF2 and preventing the misappropriation of this tRNA by the elongation apparatus. The protein is Methionyl-tRNA formyltransferase of Clavibacter sepedonicus (Clavibacter michiganensis subsp. sepedonicus).